Here is a 544-residue protein sequence, read N- to C-terminus: Chaperonin GroEL 1 (544 aa).

ATP-binding positions include 29–32 (TLGP), 86–90 (DGTTT), Gly-413, 479–481 (NAA), and Asp-495. The segment at 525–544 (PEPKDNAPAGAGAGGGDFDY) is disordered. The span at 535–544 (AGAGGGDFDY) shows a compositional bias: gly residues.

It belongs to the chaperonin (HSP60) family. In terms of assembly, forms a cylinder of 14 subunits composed of two heptameric rings stacked back-to-back. Interacts with the co-chaperonin GroES.

The protein resides in the cytoplasm. It carries out the reaction ATP + H2O + a folded polypeptide = ADP + phosphate + an unfolded polypeptide.. In terms of biological role, together with its co-chaperonin GroES, plays an essential role in assisting protein folding. The GroEL-GroES system forms a nano-cage that allows encapsulation of the non-native substrate proteins and provides a physical environment optimized to promote and accelerate protein folding. The sequence is that of Chaperonin GroEL 1 from Nostoc sp. (strain PCC 7120 / SAG 25.82 / UTEX 2576).